Here is a 109-residue protein sequence, read N- to C-terminus: MNIASGMNQMLAQLKATSDLAAGGNKPAAVAPAASQADFGQLLKSAVDQVNTVQQTANQLSQEFVRGNQDVELHDVMISLQKANVSFQSMIQVRNRLVTAYQEIMNMQV.

The protein belongs to the FliE family.

The protein localises to the bacterial flagellum basal body. This Nitrosomonas eutropha (strain DSM 101675 / C91 / Nm57) protein is Flagellar hook-basal body complex protein FliE.